The sequence spans 394 residues: Ribulose bisphosphate carboxylase large chain (394 aa).

At Lys5 the chain carries N6,N6,N6-trimethyllysine. Substrate-binding residues include Asn114 and Thr164. Catalysis depends on Lys166, which acts as the Proton acceptor. Position 168 (Lys168) interacts with substrate. Residues Lys192, Asp194, and Glu195 each coordinate Mg(2+). An N6-carboxylysine modification is found at Lys192. The active-site Proton acceptor is His285. Substrate is bound by residues Arg286, His318, and Ser370.

It belongs to the RuBisCO large chain family. Type I subfamily. In terms of assembly, heterohexadecamer of 8 large chains and 8 small chains. Mg(2+) serves as cofactor.

It localises to the plastid. The protein resides in the chloroplast. It carries out the reaction 2 (2R)-3-phosphoglycerate + 2 H(+) = D-ribulose 1,5-bisphosphate + CO2 + H2O. It catalyses the reaction D-ribulose 1,5-bisphosphate + O2 = 2-phosphoglycolate + (2R)-3-phosphoglycerate + 2 H(+). Functionally, ruBisCO catalyzes two reactions: the carboxylation of D-ribulose 1,5-bisphosphate, the primary event in carbon dioxide fixation, as well as the oxidative fragmentation of the pentose substrate in the photorespiration process. Both reactions occur simultaneously and in competition at the same active site. The sequence is that of Ribulose bisphosphate carboxylase large chain (rbcL) from Barclaya longifolia (Orchid lily).